Reading from the N-terminus, the 571-residue chain is Probable serine/threonine-protein kinase WNK4 (571 aa).

The Protein kinase domain maps to 19-277; the sequence is GRFAEILGRG…AKELLQDPFL (259 aa). Residues 99–102 and lysine 149 contribute to the ATP site; that span reads TELF. Aspartate 166 serves as the catalytic Proton acceptor. Residues 396–425 are disordered; it reads EDDETPHDHHRHRTDSFHSSSSHASSSQAS. The segment covering 412–425 has biased composition (low complexity); it reads FHSSSSHASSSQAS. Phosphoserine is present on serine 522.

This sequence belongs to the protein kinase superfamily. Ser/Thr protein kinase family. WNK subfamily.

It catalyses the reaction L-seryl-[protein] + ATP = O-phospho-L-seryl-[protein] + ADP + H(+). The enzyme catalyses L-threonyl-[protein] + ATP = O-phospho-L-threonyl-[protein] + ADP + H(+). May regulate flowering time by modulating the photoperiod pathway. This Arabidopsis thaliana (Mouse-ear cress) protein is Probable serine/threonine-protein kinase WNK4 (WNK4).